We begin with the raw amino-acid sequence, 222 residues long: UPF0758 protein Ppha_0935 (222 aa).

The MPN domain occupies 100–222 (KIQAARDVFE…CFSFRESGLL (123 aa)). Residues H171, H173, and D184 each contribute to the Zn(2+) site. Residues 171-184 (HNHPSGDVEPSNAD) carry the JAMM motif motif.

Belongs to the UPF0758 family.

This is UPF0758 protein Ppha_0935 from Pelodictyon phaeoclathratiforme (strain DSM 5477 / BU-1).